Consider the following 202-residue polypeptide: Protease (202 aa).

Catalysis depends on residues H55, D72, and C122.

This sequence belongs to the peptidase C5 family. As to quaternary structure, interacts with protease cofactor pVI-C; this interaction is necessary for protease activation.

The protein localises to the virion. The protein resides in the host nucleus. The enzyme catalyses Cleaves proteins of the adenovirus and its host cell at two consensus sites: -Yaa-Xaa-Gly-Gly-|-Xaa- and -Yaa-Xaa-Gly-Xaa-|-Gly- (in which Yaa is Met, Ile or Leu, and Xaa is any amino acid).. Its activity is regulated as follows. Requires DNA and protease cofactor for maximal activation. Inside nascent virions, becomes partially activated by binding to the viral DNA, allowing it to cleave the cofactor that binds to the protease and fully activates it. Actin, like the viral protease cofactor, seems to act as a cofactor in the cleavage of cytokeratin 18 and of actin itself. Its function is as follows. Cleaves viral precursor proteins (pTP, pIIIa, pVI, pVII, pVIII, and pX) inside newly assembled particles giving rise to mature virions. Protease complexed to its cofactor slides along the viral DNA to specifically locate and cleave the viral precursors. Mature virions have a weakened organization compared to the unmature virions, thereby facilitating subsequent uncoating. Without maturation, the particle lacks infectivity and is unable to uncoat. Late in adenovirus infection, in the cytoplasm, may participate in the cytoskeleton destruction. Cleaves host cell cytoskeletal keratins K7 and K18. In Bovine adenovirus 7 (BAdV-7), this protein is Protease.